Here is a 72-residue protein sequence, read N- to C-terminus: MAKEDMIEVEGTVVETLPNAMFKVELENGHQVLATVSGKIRMHYIRILPGDKVTVELSPYDLTRGRITYRFK.

One can recognise an S1-like domain in the interval 1–72 (MAKEDMIEVE…TRGRITYRFK (72 aa)).

Belongs to the IF-1 family. Component of the 30S ribosomal translation pre-initiation complex which assembles on the 30S ribosome in the order IF-2 and IF-3, IF-1 and N-formylmethionyl-tRNA(fMet); mRNA recruitment can occur at any time during PIC assembly.

Its subcellular location is the cytoplasm. Its function is as follows. One of the essential components for the initiation of protein synthesis. Stabilizes the binding of IF-2 and IF-3 on the 30S subunit to which N-formylmethionyl-tRNA(fMet) subsequently binds. Helps modulate mRNA selection, yielding the 30S pre-initiation complex (PIC). Upon addition of the 50S ribosomal subunit IF-1, IF-2 and IF-3 are released leaving the mature 70S translation initiation complex. The chain is Translation initiation factor IF-1 from Enterococcus faecalis (strain ATCC 700802 / V583).